The following is an 863-amino-acid chain: Leucine--tRNA ligase (863 aa).

The 'HIGH' region motif lies at 42-52; that stretch reads PYPSGRLHMGH. The 'KMSKS' region signature appears at 622-626; the sequence is KMSKS. Lys-625 contacts ATP.

Belongs to the class-I aminoacyl-tRNA synthetase family.

The protein localises to the cytoplasm. It catalyses the reaction tRNA(Leu) + L-leucine + ATP = L-leucyl-tRNA(Leu) + AMP + diphosphate. This chain is Leucine--tRNA ligase, found in Shewanella sediminis (strain HAW-EB3).